The following is a 223-amino-acid chain: Lipoprotein signal peptidase (223 aa).

A disordered region spans residues 1 to 20 (MNSAKVNPSGHAPTPAPTAS). The next 4 membrane-spanning stretches (helical) occupy residues 32-52 (LFFGLAIAGGALDLWSKEAIF), 65-85 (WIIEGYFGIETAVNIGAVFGL), 91-111 (LVFAAISVFAAAAIIAWLFFF), and 116-136 (SCWLTFALGCITGGIIGNLYD). Catalysis depends on residues Asp-156 and Asp-175. The chain crosses the membrane as a helical span at residues 173 to 193 (IADSLLVTGAIMLLVQSFFFP). The tract at residues 196–223 (PHGEADGNELPGRRAPDEPTEGTKPAAS) is disordered.

Belongs to the peptidase A8 family.

It is found in the cell inner membrane. The catalysed reaction is Release of signal peptides from bacterial membrane prolipoproteins. Hydrolyzes -Xaa-Yaa-Zaa-|-(S,diacylglyceryl)Cys-, in which Xaa is hydrophobic (preferably Leu), and Yaa (Ala or Ser) and Zaa (Gly or Ala) have small, neutral side chains.. It functions in the pathway protein modification; lipoprotein biosynthesis (signal peptide cleavage). In terms of biological role, this protein specifically catalyzes the removal of signal peptides from prolipoproteins. The sequence is that of Lipoprotein signal peptidase from Rhodopirellula baltica (strain DSM 10527 / NCIMB 13988 / SH1).